The sequence spans 217 residues: Methylthioribulose-1-phosphate dehydratase (217 aa).

H106 and H108 together coordinate Zn(2+).

The protein belongs to the aldolase class II family. MtnB subfamily. Zn(2+) is required as a cofactor.

The enzyme catalyses 5-(methylsulfanyl)-D-ribulose 1-phosphate = 5-methylsulfanyl-2,3-dioxopentyl phosphate + H2O. The protein operates within amino-acid biosynthesis; L-methionine biosynthesis via salvage pathway; L-methionine from S-methyl-5-thio-alpha-D-ribose 1-phosphate: step 2/6. Functionally, catalyzes the dehydration of methylthioribulose-1-phosphate (MTRu-1-P) into 2,3-diketo-5-methylthiopentyl-1-phosphate (DK-MTP-1-P). In Xanthomonas campestris pv. campestris (strain 8004), this protein is Methylthioribulose-1-phosphate dehydratase.